A 141-amino-acid chain; its full sequence is MWLQNLLFLGIVVYSLSAPTRSPITVTRPWKHVEAIKEALNLLDDMPVTLNEEVEVVSNEFSFKKLTCVQTRLKIFEQGLRGNFTKLKGALNMTASYYQTYCPPTPETDCETQVTTYADFIDSLKTFLTDIPFECKKPGQK.

An N-terminal signal peptide occupies residues 1–17; the sequence is MWLQNLLFLGIVVYSLS. A glycan (O-linked (GalNAc...) serine) is linked at Ser22. Thr27 carries an O-linked (GalNAc...) threonine glycan. 2 cysteine pairs are disulfide-bonded: Cys68/Cys110 and Cys102/Cys135. N-linked (GlcNAc...) asparagine glycosylation is found at Asn83 and Asn92.

The protein belongs to the GM-CSF family. Monomer. The signaling GM-CSF receptor complex is a dodecamer of two head-to-head hexamers of two alpha, two beta, and two ligand subunits.

The protein resides in the secreted. In terms of biological role, cytokine that stimulates the growth and differentiation of hematopoietic precursor cells from various lineages, including granulocytes, macrophages, eosinophils and erythrocytes. This chain is Granulocyte-macrophage colony-stimulating factor (Csf2), found in Mus musculus (Mouse).